A 182-amino-acid chain; its full sequence is Auxin-responsive protein IAA9 (182 aa).

Residues 1 to 41 form a disordered region; it reads MELELGLAPPNSGHLVVDELSSSSSSGGGSGSAPVSASSAG. Positions 3 to 7 match the EAR-like (transcriptional repression) motif; sequence LELGL. Positions 32-41 are enriched in low complexity; that stretch reads SAPVSASSAG. In terms of domain architecture, PB1 spans 92 to 182; sequence ANYVKVKKEG…RSVKRLKILG (91 aa).

It belongs to the Aux/IAA family. Homodimers and heterodimers. In terms of tissue distribution, expressed in etiolated shoots and flowers.

It localises to the nucleus. In terms of biological role, aux/IAA proteins are short-lived transcriptional factors that function as repressors of early auxin response genes at low auxin concentrations. In Oryza sativa subsp. japonica (Rice), this protein is Auxin-responsive protein IAA9 (IAA9).